A 236-amino-acid chain; its full sequence is Probable metal transport system ATP-binding protein TC_0697 (236 aa).

Residues 5–236 (LILENVSFRY…FCCNTFGKCS (232 aa)) form the ABC transporter domain. 39–46 (GPNGGGKT) provides a ligand contact to ATP.

It belongs to the ABC transporter superfamily.

It is found in the cell inner membrane. Its function is as follows. Part of an ATP-driven transport system TC_0696/TC_0697/TC_0698 for a metal. Probably responsible for energy coupling to the transport system. The sequence is that of Probable metal transport system ATP-binding protein TC_0697 from Chlamydia muridarum (strain MoPn / Nigg).